Reading from the N-terminus, the 504-residue chain is Putative ribose/galactose/methyl galactoside import ATP-binding protein (504 aa).

ABC transporter domains are found at residues 5-242 (ISVK…GRNL) and 252-497 (TSAN…TRRE). 37 to 44 (GENGAGKS) serves as a coordination point for ATP.

The protein belongs to the ABC transporter superfamily. Carbohydrate importer 2 (CUT2) (TC 3.A.1.2) family.

It localises to the cell inner membrane. The catalysed reaction is D-ribose(out) + ATP + H2O = D-ribose(in) + ADP + phosphate + H(+). It carries out the reaction D-galactose(out) + ATP + H2O = D-galactose(in) + ADP + phosphate + H(+). In terms of biological role, part of an ABC transporter complex involved in carbohydrate import. Could be involved in ribose, galactose and/or methyl galactoside import. Responsible for energy coupling to the transport system. The sequence is that of Putative ribose/galactose/methyl galactoside import ATP-binding protein from Albidiferax ferrireducens (strain ATCC BAA-621 / DSM 15236 / T118) (Rhodoferax ferrireducens).